A 60-amino-acid polypeptide reads, in one-letter code: Potassium channel toxin alpha-KTx 15.8 (60 aa).

The N-terminal stretch at 1–22 is a signal peptide; sequence MKFSSIILLTLLICSMSIFGNC. Gln23 bears the Pyrrolidone carboxylic acid mark. 3 disulfides stabilise this stretch: Cys30-Cys50, Cys35-Cys55, and Cys39-Cys57.

It belongs to the short scorpion toxin superfamily. Potassium channel inhibitor family. Alpha-KTx 15 subfamily. As to expression, expressed by the venom gland.

The protein localises to the secreted. In terms of biological role, blocker of A-type voltage-gated potassium channels of cerebellar granular cells. May also inhibit Kv4/KCND when coexpressed with DPP6 or DPP10. The occlusion of the outer entry of the K(+) conducting pore is partially reversible and affects both open and closed channels. It shares the same target in rat brain than BmTX3 (AC Q8I0L5) and AmmTX3 (AC P60208). Also shows a weak inhibition on Kv1.2/KCNA2 and Kv1.3/KCNA3 voltage-gated potassium channels. The chain is Potassium channel toxin alpha-KTx 15.8 from Olivierus martensii (Manchurian scorpion).